Reading from the N-terminus, the 224-residue chain is Urease accessory protein UreF (224 aa).

Belongs to the UreF family. As to quaternary structure, ureD, UreF and UreG form a complex that acts as a GTP-hydrolysis-dependent molecular chaperone, activating the urease apoprotein by helping to assemble the nickel containing metallocenter of UreC. The UreE protein probably delivers the nickel.

It is found in the cytoplasm. In terms of biological role, required for maturation of urease via the functional incorporation of the urease nickel metallocenter. The sequence is that of Urease accessory protein UreF from Methylorubrum populi (strain ATCC BAA-705 / NCIMB 13946 / BJ001) (Methylobacterium populi).